The primary structure comprises 372 residues: Ciliary neurotrophic factor receptor subunit alpha (372 aa).

The N-terminal stretch at 1 to 22 (MAASVPWACCAVLAAAAAAVYT) is a signal peptide. Residues 27-104 (PQEAPHVQYE…WHLRHQVLLH (78 aa)) form the Ig-like C2-type domain. Cys46 and Cys89 are oxidised to a cystine. 4 N-linked (GlcNAc...) asparagine glycosylation sites follow: Asn60, Asn70, Asn142, and Asn190. Fibronectin type-III domains lie at 108–205 (PPRE…VKPD) and 206–306 (PPEN…TEEP). A WSXWS motif motif is present at residues 290-294 (WSDWS). Positions 301–338 (PWTEEPRHLTTEAQAPETTTSTTSSLAPPPTTKICDPG) are disordered. Residues 311-326 (TEAQAPETTTSTTSSL) show a composition bias toward low complexity. Ser342 carries the GPI-anchor amidated serine lipid modification. The propeptide at 343–372 (GGGPSILFLTSVPVTLVLAAAAATANNLLI) is removed in mature form.

Belongs to the type I cytokine receptor family. Type 3 subfamily. Forms a heterotrimer with LIFR and IL6ST. Interacts with heterodimeric neurotropic cytokine composed of CLCF1/CLC and CRLF1/CLF-1. Either alone or in complex with the heterodimer CLCF1-CRLF1 interacts with SORL1; this interaction may promote internalization and lysosomal degradation.

The protein resides in the cell membrane. Functionally, binds to CNTF. The alpha subunit provides the receptor specificity. The chain is Ciliary neurotrophic factor receptor subunit alpha (Cntfr) from Mus musculus (Mouse).